Reading from the N-terminus, the 158-residue chain is Sec-independent protein translocase protein TatB (158 aa).

The chain crosses the membrane as a helical span at residues 2-22 (FDGIGFMELLLIGVLGLVVLG). The disordered stretch occupies residues 86–158 (LKQAAQSVNR…DTSSNPKANG (73 aa)). 3 stretches are compositionally biased toward polar residues: residues 88–107 (QAAQ…SQGT), 113–136 (QIHS…QHLT), and 143–158 (EPSQ…KANG).

The protein belongs to the TatB family. The Tat system comprises two distinct complexes: a TatABC complex, containing multiple copies of TatA, TatB and TatC subunits, and a separate TatA complex, containing only TatA subunits. Substrates initially bind to the TatABC complex, which probably triggers association of the separate TatA complex to form the active translocon.

The protein resides in the cell inner membrane. Its function is as follows. Part of the twin-arginine translocation (Tat) system that transports large folded proteins containing a characteristic twin-arginine motif in their signal peptide across membranes. Together with TatC, TatB is part of a receptor directly interacting with Tat signal peptides. TatB may form an oligomeric binding site that transiently accommodates folded Tat precursor proteins before their translocation. This chain is Sec-independent protein translocase protein TatB, found in Shewanella putrefaciens (strain CN-32 / ATCC BAA-453).